A 320-amino-acid chain; its full sequence is tRNA-cytidine(32) 2-sulfurtransferase (320 aa).

Residues 54 to 59 (SGGKDS) carry the PP-loop motif motif. Positions 129, 132, and 220 each coordinate [4Fe-4S] cluster.

Belongs to the TtcA family. Homodimer. It depends on Mg(2+) as a cofactor. [4Fe-4S] cluster is required as a cofactor.

The protein localises to the cytoplasm. The catalysed reaction is cytidine(32) in tRNA + S-sulfanyl-L-cysteinyl-[cysteine desulfurase] + AH2 + ATP = 2-thiocytidine(32) in tRNA + L-cysteinyl-[cysteine desulfurase] + A + AMP + diphosphate + H(+). It participates in tRNA modification. In terms of biological role, catalyzes the ATP-dependent 2-thiolation of cytidine in position 32 of tRNA, to form 2-thiocytidine (s(2)C32). The sulfur atoms are provided by the cysteine/cysteine desulfurase (IscS) system. This chain is tRNA-cytidine(32) 2-sulfurtransferase, found in Bordetella pertussis (strain Tohama I / ATCC BAA-589 / NCTC 13251).